We begin with the raw amino-acid sequence, 155 residues long: SsrA-binding protein (155 aa).

The protein belongs to the SmpB family.

The protein localises to the cytoplasm. Its function is as follows. Required for rescue of stalled ribosomes mediated by trans-translation. Binds to transfer-messenger RNA (tmRNA), required for stable association of tmRNA with ribosomes. tmRNA and SmpB together mimic tRNA shape, replacing the anticodon stem-loop with SmpB. tmRNA is encoded by the ssrA gene; the 2 termini fold to resemble tRNA(Ala) and it encodes a 'tag peptide', a short internal open reading frame. During trans-translation Ala-aminoacylated tmRNA acts like a tRNA, entering the A-site of stalled ribosomes, displacing the stalled mRNA. The ribosome then switches to translate the ORF on the tmRNA; the nascent peptide is terminated with the 'tag peptide' encoded by the tmRNA and targeted for degradation. The ribosome is freed to recommence translation, which seems to be the essential function of trans-translation. This chain is SsrA-binding protein, found in Streptococcus agalactiae serotype Ia (strain ATCC 27591 / A909 / CDC SS700).